The primary structure comprises 178 residues: Orotate phosphoribosyltransferase (178 aa).

5-phospho-alpha-D-ribose 1-diphosphate-binding positions include Arg-92, Lys-93, Lys-96, and 118 to 126 (EDVITTGSS). Orotate contacts are provided by Thr-122 and Arg-150.

Belongs to the purine/pyrimidine phosphoribosyltransferase family. PyrE subfamily. Homodimer. Mg(2+) serves as cofactor.

It catalyses the reaction orotidine 5'-phosphate + diphosphate = orotate + 5-phospho-alpha-D-ribose 1-diphosphate. The protein operates within pyrimidine metabolism; UMP biosynthesis via de novo pathway; UMP from orotate: step 1/2. Catalyzes the transfer of a ribosyl phosphate group from 5-phosphoribose 1-diphosphate to orotate, leading to the formation of orotidine monophosphate (OMP). The sequence is that of Orotate phosphoribosyltransferase from Archaeoglobus fulgidus (strain ATCC 49558 / DSM 4304 / JCM 9628 / NBRC 100126 / VC-16).